A 264-amino-acid polypeptide reads, in one-letter code: MEMO1 family protein Mbur_2394 (264 aa).

Belongs to the MEMO1 family.

This is MEMO1 family protein Mbur_2394 from Methanococcoides burtonii (strain DSM 6242 / NBRC 107633 / OCM 468 / ACE-M).